A 121-amino-acid polypeptide reads, in one-letter code: uncharacterized protein (121 aa).

This is an uncharacterized protein from Methanocaldococcus jannaschii (strain ATCC 43067 / DSM 2661 / JAL-1 / JCM 10045 / NBRC 100440) (Methanococcus jannaschii).